A 162-amino-acid polypeptide reads, in one-letter code: Putative pre-16S rRNA nuclease (162 aa).

Belongs to the YqgF nuclease family.

The protein localises to the cytoplasm. Functionally, could be a nuclease involved in processing of the 5'-end of pre-16S rRNA. The chain is Putative pre-16S rRNA nuclease from Brucella melitensis biotype 1 (strain ATCC 23456 / CCUG 17765 / NCTC 10094 / 16M).